Reading from the N-terminus, the 228-residue chain is HTH-type transcriptional activator FasR (228 aa).

The tract at residues 1–39 (MSDLAKTAQRRALRSSGSARPDEDVPAPNRRGNRLPRDE) is disordered. Residues 38 to 98 (DERRGQLLVV…AVLHRHVENL (61 aa)) form the HTH tetR-type domain. The H-T-H motif DNA-binding region spans 61-80 (GMDEIADRAGVSKPVLYQHF).

In terms of assembly, homodimer.

Its activity is regulated as follows. FasR:DNA binding is regulated by long-chain acyl-CoAs (C14- to C26-CoA), which act as effector molecules that modulate the affinity of FasR for its DNA binding sequences and therefore modulate the expression of the essential fas-acpS operon. FasR activity is not affected by mycolic acid biosynthesis intermediates. Transcriptional activator that plays a central role in sensing mycobacterial long-chain fatty acids and regulating lipid biosynthesis. Activates the expression of the genes encoding the fatty acid synthase (fas) and the 4-phosphopantetheinyl transferase (acpS), whose products are involved in the fatty acid and mycolic acid biosynthesis. Specifically binds to three conserved operator sequences present in the fas-acpS promoter region. Not essential for M.tuberculosis viability, although it is required for the optimal growth in vitro and for virulence in macrophages and in a mouse model of infection. The polypeptide is HTH-type transcriptional activator FasR (Mycobacterium tuberculosis (strain ATCC 25618 / H37Rv)).